A 315-amino-acid chain; its full sequence is Aspartate carbamoyltransferase catalytic subunit (315 aa).

Positions 61 and 62 each coordinate carbamoyl phosphate. K90 contacts L-aspartate. Residues R111, H139, and Q142 each coordinate carbamoyl phosphate. L-aspartate-binding residues include R172 and R234. Residues L274 and P275 each contribute to the carbamoyl phosphate site.

This sequence belongs to the aspartate/ornithine carbamoyltransferase superfamily. ATCase family. In terms of assembly, heterooligomer of catalytic and regulatory chains.

The catalysed reaction is carbamoyl phosphate + L-aspartate = N-carbamoyl-L-aspartate + phosphate + H(+). The protein operates within pyrimidine metabolism; UMP biosynthesis via de novo pathway; (S)-dihydroorotate from bicarbonate: step 2/3. In terms of biological role, catalyzes the condensation of carbamoyl phosphate and aspartate to form carbamoyl aspartate and inorganic phosphate, the committed step in the de novo pyrimidine nucleotide biosynthesis pathway. The sequence is that of Aspartate carbamoyltransferase catalytic subunit from Hyperthermus butylicus (strain DSM 5456 / JCM 9403 / PLM1-5).